The primary structure comprises 275 residues: 4-deoxy-L-threo-5-hexosulose-uronate ketol-isomerase (275 aa).

Residues H193, H195, E200, and H242 each contribute to the Zn(2+) site.

This sequence belongs to the KduI family. Zn(2+) is required as a cofactor.

It carries out the reaction 5-dehydro-4-deoxy-D-glucuronate = 3-deoxy-D-glycero-2,5-hexodiulosonate. Its pathway is glycan metabolism; pectin degradation; 2-dehydro-3-deoxy-D-gluconate from pectin: step 4/5. In terms of biological role, catalyzes the isomerization of 5-dehydro-4-deoxy-D-glucuronate to 3-deoxy-D-glycero-2,5-hexodiulosonate. The polypeptide is 4-deoxy-L-threo-5-hexosulose-uronate ketol-isomerase (Bacillus pumilus (strain SAFR-032)).